The following is a 328-amino-acid chain: Nickel import system permease protein NikB (328 aa).

A run of 6 helical transmembrane segments spans residues 11 to 31 (LMQM…LMKL), 104 to 124 (LLIS…LGII), 139 to 159 (VIST…LLFI), 170 to 190 (ILSQ…AYII), 229 to 249 (ILPI…GTVV), and 279 to 299 (VLFI…LTLL). The 198-residue stretch at 100–297 (APITLLISFS…IINTIADLLT (198 aa)) folds into the ABC transmembrane type-1 domain.

This sequence belongs to the binding-protein-dependent transport system permease family. OppBC subfamily. The complex is composed of two ATP-binding proteins (NikD and NikE), two transmembrane proteins (NikB and NikC) and a solute-binding protein (NikA).

It localises to the cell membrane. Functionally, part of the ABC transporter complex NikABCDE (Opp2) involved in nickel import. Probably responsible for the translocation of the substrate across the membrane. This is Nickel import system permease protein NikB from Staphylococcus aureus (strain MSSA476).